Consider the following 511-residue polypeptide: MMKMRWLSAAVMLTLYTSSSWAFSIDDVAKQAQSLAGKGYEAPKSNLPSVFRDMKYADYQQIQFNHDKAYWNNLKTPFKLEFYHQGMYFDTPVKINEVTATAVKRIKYSPDYFTFGDVQHDKDTVKDLGFAGFKVLYPINSKDKNDEIVSMLGASYFRVIGAGQVYGLSARGLAIDTALPSGEEFPRFKEFWIERPKPTDKRLTIYALLDSPRATGAYKFVVMPGRDTVVDVQSKIYLRDKVGKLGGAPLTSMFLFGPNQPSPANNYRPELHDSNGLSIHAGNGEWIWRPLNNPKHLAVSSFSMENPQGFGLLQRGRDFSRFEDLDDRYDLRPSAWVTPKGEWGKGSVELVEIPTNDETNDNIVAYWTPDQLPEPGKEMNFKYTITFSRDEDKLHAPDNAWVQQTRRSTGDVKQSNLIRQPDGTIAFVVDFTGAEMKKLPEDTPVTAQTSIGDNGEIVESTVRYNPVTKGWRLVMRVKVKDAKKTTEMRAALVNADQTLSETWSYQLPANE.

The first 22 residues, 1 to 22, serve as a signal peptide directing secretion; the sequence is MMKMRWLSAAVMLTLYTSSSWA.

It belongs to the OpgD/OpgG family.

It is found in the periplasm. Its pathway is glycan metabolism; osmoregulated periplasmic glucan (OPG) biosynthesis. Functionally, involved in the biosynthesis of osmoregulated periplasmic glucans (OPGs). This is Glucans biosynthesis protein G from Shigella boydii serotype 4 (strain Sb227).